The chain runs to 474 residues: Mercuric reductase (474 aa).

Ala19, Gly39, and Thr44 together coordinate FAD. A disulfide bridge links Cys45 with Cys50. Lys54, Ala119, Asp315, and Val323 together coordinate FAD. Hg(2+) is bound by residues Cys471 and Cys472.

It belongs to the class-I pyridine nucleotide-disulfide oxidoreductase family. As to quaternary structure, homodimer. FAD serves as cofactor.

The catalysed reaction is Hg + NADP(+) + H(+) = Hg(2+) + NADPH. In terms of biological role, resistance to Hg(2+) in bacteria appears to be governed by a specialized system which includes mercuric reductase. MerA protein is responsible for volatilizing mercury as Hg(0). This is Mercuric reductase (merA) from Streptomyces lividans.